We begin with the raw amino-acid sequence, 391 residues long: 1-deoxy-D-xylulose 5-phosphate reductoisomerase (391 aa).

NADPH is bound by residues Thr11, Gly12, Ser13, Ile14, and Asn126. Lys127 provides a ligand contact to 1-deoxy-D-xylulose 5-phosphate. Glu128 is an NADPH binding site. Residue Asp152 participates in Mn(2+) binding. 4 residues coordinate 1-deoxy-D-xylulose 5-phosphate: Ser153, Glu154, Ser176, and His199. Mn(2+) is bound at residue Glu154. Gly205 is a binding site for NADPH. Residues Ser212, Asn217, Lys218, and Glu221 each coordinate 1-deoxy-D-xylulose 5-phosphate. Glu221 contacts Mn(2+).

Belongs to the DXR family. Requires Mg(2+) as cofactor. The cofactor is Mn(2+).

It catalyses the reaction 2-C-methyl-D-erythritol 4-phosphate + NADP(+) = 1-deoxy-D-xylulose 5-phosphate + NADPH + H(+). It participates in isoprenoid biosynthesis; isopentenyl diphosphate biosynthesis via DXP pathway; isopentenyl diphosphate from 1-deoxy-D-xylulose 5-phosphate: step 1/6. Functionally, catalyzes the NADPH-dependent rearrangement and reduction of 1-deoxy-D-xylulose-5-phosphate (DXP) to 2-C-methyl-D-erythritol 4-phosphate (MEP). The sequence is that of 1-deoxy-D-xylulose 5-phosphate reductoisomerase from Acidithiobacillus ferrooxidans (strain ATCC 53993 / BNL-5-31) (Leptospirillum ferrooxidans (ATCC 53993)).